The following is a 396-amino-acid chain: Probable porphobilinogen deaminase (396 aa).

A disordered region spans residues 159 to 224 (APALHREHER…DTASSSEFEQ (66 aa)). Residues 159–245 (APALHREHER…LQQSAMERDP (87 aa)) form an insert region. Residues 162 to 189 (LHREHERRTEAEKEAQSRDAREQRRGDY) are compositionally biased toward basic and acidic residues. Residues 200-215 (LDTEDGEEGAADDGDD) are compositionally biased toward acidic residues. An S-(dipyrrolylmethanemethyl)cysteine modification is found at cysteine 328.

Belongs to the HMBS family. The cofactor is dipyrromethane.

The catalysed reaction is 4 porphobilinogen + H2O = hydroxymethylbilane + 4 NH4(+). It functions in the pathway porphyrin-containing compound metabolism; protoporphyrin-IX biosynthesis; coproporphyrinogen-III from 5-aminolevulinate: step 2/4. In terms of biological role, tetrapolymerization of the monopyrrole PBG into the hydroxymethylbilane pre-uroporphyrinogen in several discrete steps. This chain is Probable porphobilinogen deaminase (hemC), found in Halobacterium salinarum (strain ATCC 700922 / JCM 11081 / NRC-1) (Halobacterium halobium).